The chain runs to 158 residues: 6,7-dimethyl-8-ribityllumazine synthase (158 aa).

Residues Phe-24, 58–60 (AFE), and 82–84 (AVI) each bind 5-amino-6-(D-ribitylamino)uracil. 87-88 (GT) serves as a coordination point for (2S)-2-hydroxy-3-oxobutyl phosphate. The Proton donor role is filled by His-90. Phe-115 lines the 5-amino-6-(D-ribitylamino)uracil pocket. Arg-129 provides a ligand contact to (2S)-2-hydroxy-3-oxobutyl phosphate.

The protein belongs to the DMRL synthase family. As to quaternary structure, forms an icosahedral capsid composed of 60 subunits, arranged as a dodecamer of pentamers.

It catalyses the reaction (2S)-2-hydroxy-3-oxobutyl phosphate + 5-amino-6-(D-ribitylamino)uracil = 6,7-dimethyl-8-(1-D-ribityl)lumazine + phosphate + 2 H2O + H(+). It functions in the pathway cofactor biosynthesis; riboflavin biosynthesis; riboflavin from 2-hydroxy-3-oxobutyl phosphate and 5-amino-6-(D-ribitylamino)uracil: step 1/2. Its function is as follows. Catalyzes the formation of 6,7-dimethyl-8-ribityllumazine by condensation of 5-amino-6-(D-ribitylamino)uracil with 3,4-dihydroxy-2-butanone 4-phosphate. This is the penultimate step in the biosynthesis of riboflavin. This chain is 6,7-dimethyl-8-ribityllumazine synthase, found in Pseudomonas putida (strain GB-1).